The primary structure comprises 296 residues: Protease HtpX homolog (296 aa).

2 helical membrane-spanning segments follow: residues 7-27 (TVLL…LVAG) and 29-49 (QGMI…YFFS). Zn(2+) is bound at residue H131. Residue E132 is part of the active site. Zn(2+) is bound at residue H135. 2 helical membrane-spanning segments follow: residues 141–161 (ILIS…ANMA) and 178–198 (IASI…ATLI). E207 contributes to the Zn(2+) binding site.

This sequence belongs to the peptidase M48B family. It depends on Zn(2+) as a cofactor.

The protein localises to the cell inner membrane. This Sulfurihydrogenibium sp. (strain YO3AOP1) protein is Protease HtpX homolog.